The following is a 398-amino-acid chain: Na(+)/H(+) antiporter NhaA (398 aa).

The next 11 helical transmembrane spans lie at 21–41 (LGGY…NSPL), 66–86 (VLHW…GLEI), 101–121 (IVLP…VYLL), 132–152 (GWAI…ALLG), 161–181 (IFLT…IAVF), 184–204 (AELN…LCVL), 216–236 (LLVG…ATLA), 274–294 (LLIV…GMGI), 305–325 (IALG…WLAI), 343–363 (GVAL…ALAF), and 374–394 (IGVL…LRVL).

The protein belongs to the NhaA Na(+)/H(+) (TC 2.A.33) antiporter family.

Its subcellular location is the cell inner membrane. It catalyses the reaction Na(+)(in) + 2 H(+)(out) = Na(+)(out) + 2 H(+)(in). Na(+)/H(+) antiporter that extrudes sodium in exchange for external protons. The polypeptide is Na(+)/H(+) antiporter NhaA (Bordetella bronchiseptica (strain ATCC BAA-588 / NCTC 13252 / RB50) (Alcaligenes bronchisepticus)).